Reading from the N-terminus, the 581-residue chain is Eukaryotic translation initiation factor 2A (581 aa).

Met-1 bears the N-acetylmethionine mark. Residue Ala-2 is modified to N-acetylalanine; in Eukaryotic translation initiation factor 2A, N-terminally processed. At Thr-5 the chain carries Phosphothreonine. WD repeat units lie at residues 23 to 63 (PHFT…NIIN), 125 to 163 (QKKMQNWCPSWSDDEIICARNVNNEVHFFENNNFNTIAN), and 356 to 401 (VASD…HKYD). A disordered region spans residues 432–533 (PSEVPSEEPK…SGDPEVDKKI (102 aa)). The segment covering 494-503 (KKAAKQEARS) has biased composition (basic and acidic residues). Ser-503, Ser-513, and Ser-522 each carry phosphoserine. Polar residues predominate over residues 514 to 524 (APRNTVTQSAS). A coiled-coil region spans residues 527–578 (PEVDKKIKNLKKKLKAIEQLKEQAAAGKQLEKNQLEKIQKETALLQELEDLE).

The protein belongs to the WD repeat EIF2A family.

Functionally, functions in the early steps of protein synthesis of a small number of specific mRNAs. Acts by directing the binding of methionyl-tRNAi to 40S ribosomal subunits. In contrast to the eIF-2 complex, it binds methionyl-tRNAi to 40S subunits in a codon-dependent manner, whereas the eIF-2 complex binds methionyl-tRNAi to 40S subunits in a GTP-dependent manner. This Mus musculus (Mouse) protein is Eukaryotic translation initiation factor 2A (Eif2a).